Reading from the N-terminus, the 237-residue chain is Cytosolic-abundant heat soluble protein 1 (237 aa).

Composition is skewed to basic and acidic residues over residues 1–17 (MPYEKHVEQTVVEKTEQ) and 91–105 (VDMRPSPKLAEEARR). Disordered stretches follow at residues 1–35 (MPYEKHVEQTVVEKTEQPGHSSTHHAPAQRTVARE) and 85–105 (SGASTEVDMRPSPKLAEEARR). Residues 98-201 (KLAEEARRDA…KEALERSRMA (104 aa)) adopt a coiled-coil conformation. 2 CAHS motif regions span residues 132 to 150 (YRHQTEAEAEKIRRELEKQ) and 169 to 187 (QKREVDLEAKMAKRELDRE). The segment at 212-237 (AGHTVSGGTTVSSVDKVETVRERKHH) is disordered. A compositionally biased stretch (basic and acidic residues) spans 226 to 237 (DKVETVRERKHH).

The protein belongs to the Cytosolic-abundant heat soluble protein (CAHS) family.

It is found in the cytoplasm. It localises to the nucleus. Functionally, CAHS proteins are cytosolic heat soluble proteins that seem to contribute to the anhydrobiosis in tardigrades, but their specific mechanisms are yet to be identified. It is possible that protection during anhydrobiosis might occur via the stabilization of vitrifying small molecules such as sugars, but not via the direct glass transition of CAHS proteins themselves. The sequence is that of Cytosolic-abundant heat soluble protein 1 from Ramazzottius varieornatus (Water bear).